The following is a 425-amino-acid chain: UDP-N-acetylglucosamine 1-carboxyvinyltransferase (425 aa).

Lys31–Asn32 serves as a coordination point for phosphoenolpyruvate. Residue Arg100 coordinates UDP-N-acetyl-alpha-D-glucosamine. Cys124 (proton donor) is an active-site residue. At Cys124 the chain carries 2-(S-cysteinyl)pyruvic acid O-phosphothioketal. Residues Arg129–Gln133, Thr170–Thr172, Asp311, and Ile333 contribute to the UDP-N-acetyl-alpha-D-glucosamine site.

The protein belongs to the EPSP synthase family. MurA subfamily.

It localises to the cytoplasm. It catalyses the reaction phosphoenolpyruvate + UDP-N-acetyl-alpha-D-glucosamine = UDP-N-acetyl-3-O-(1-carboxyvinyl)-alpha-D-glucosamine + phosphate. Its pathway is cell wall biogenesis; peptidoglycan biosynthesis. Its function is as follows. Cell wall formation. Adds enolpyruvyl to UDP-N-acetylglucosamine. The sequence is that of UDP-N-acetylglucosamine 1-carboxyvinyltransferase from Aquifex aeolicus (strain VF5).